The chain runs to 722 residues: uncharacterized protein (722 aa).

This is an uncharacterized protein from Treponema pallidum (strain Nichols).